The sequence spans 464 residues: Glutamate--tRNA ligase (464 aa).

The short motif at 10–20 (PSPTGYLHIGG) is the 'HIGH' region element. Positions 113 to 130 (QEAKKEKPRYDGRWRPEA) are enriched in basic and acidic residues. Positions 113 to 142 (QEAKKEKPRYDGRWRPEAGKALPVPPTDVP) are disordered. The short motif at 242–246 (KLSKR) is the 'KMSKS' region element. Lys-245 is an ATP binding site.

The protein belongs to the class-I aminoacyl-tRNA synthetase family. Glutamate--tRNA ligase type 1 subfamily. Monomer.

The protein localises to the cytoplasm. The catalysed reaction is tRNA(Glu) + L-glutamate + ATP = L-glutamyl-tRNA(Glu) + AMP + diphosphate. Its function is as follows. Catalyzes the attachment of glutamate to tRNA(Glu) in a two-step reaction: glutamate is first activated by ATP to form Glu-AMP and then transferred to the acceptor end of tRNA(Glu). In Dechloromonas aromatica (strain RCB), this protein is Glutamate--tRNA ligase.